The following is a 172-amino-acid chain: Small ribosomal subunit protein uS5 (172 aa).

In terms of domain architecture, S5 DRBM spans 17-80; that stretch reads LKEKMIAINR…EEARRNMTKV (64 aa).

Belongs to the universal ribosomal protein uS5 family. In terms of assembly, part of the 30S ribosomal subunit. Contacts proteins S4 and S8.

With S4 and S12 plays an important role in translational accuracy. Functionally, located at the back of the 30S subunit body where it stabilizes the conformation of the head with respect to the body. This chain is Small ribosomal subunit protein uS5, found in Polaromonas naphthalenivorans (strain CJ2).